The chain runs to 738 residues: Elongation factor G, mitochondrial (738 aa).

The interval 1-20 (MCIGPAPTPETEEELPPSPQ) is disordered. One can recognise a tr-type G domain in the interval 32-320 (RFQRNIGVSA…GVCAYLPNPA (289 aa)). GTP is bound by residues 41-48 (AHIDSGKT), 118-122 (DTPGH), and 172-175 (NKMD).

It belongs to the TRAFAC class translation factor GTPase superfamily. Classic translation factor GTPase family. EF-G/EF-2 subfamily.

It is found in the mitochondrion. The protein operates within protein biosynthesis; polypeptide chain elongation. Functionally, mitochondrial GTPase that catalyzes the GTP-dependent ribosomal translocation step during translation elongation. During this step, the ribosome changes from the pre-translocational (PRE) to the post-translocational (POST) state as the newly formed A-site-bound peptidyl-tRNA and P-site-bound deacylated tRNA move to the P and E sites, respectively. Catalyzes the coordinated movement of the two tRNA molecules, the mRNA and conformational changes in the ribosome. The protein is Elongation factor G, mitochondrial of Laccaria bicolor (strain S238N-H82 / ATCC MYA-4686) (Bicoloured deceiver).